The primary structure comprises 251 residues: Tungstate/molybdate/chromate-binding protein ModA (251 aa).

The first 23 residues, 1 to 23 (MTTRLPQLLLALLASAVSLAASA), serve as a signal peptide directing secretion. 2 residues coordinate molybdate: Thr60 and Ile168.

It belongs to the bacterial solute-binding protein ModA family. As to quaternary structure, the complex is composed of two ATP-binding proteins (ModC), two transmembrane proteins (ModB) and a solute-binding protein (ModA).

The protein localises to the periplasm. In terms of biological role, part of the ABC transporter complex ModABC involved in the transport of molybdenum into the cell. Binds tungstate and molybdate. Can also bind chromate, with lower affinity. Plays an essential role in recruitment of molybdate for nitrate reduction. This chain is Tungstate/molybdate/chromate-binding protein ModA, found in Pseudomonas aeruginosa (strain ATCC 15692 / DSM 22644 / CIP 104116 / JCM 14847 / LMG 12228 / 1C / PRS 101 / PAO1).